Here is an 82-residue protein sequence, read N- to C-terminus: ATP synthase subunit c, chloroplastic (82 aa).

2 helical membrane-spanning segments follow: residues P3 to G23 and L57 to A77.

It belongs to the ATPase C chain family. F-type ATPases have 2 components, F(1) - the catalytic core - and F(0) - the membrane proton channel. F(1) has five subunits: alpha(3), beta(3), gamma(1), delta(1), epsilon(1). F(0) has four main subunits: a(1), b(1), b'(1) and c(10-14). The alpha and beta chains form an alternating ring which encloses part of the gamma chain. F(1) is attached to F(0) by a central stalk formed by the gamma and epsilon chains, while a peripheral stalk is formed by the delta, b and b' chains.

Its subcellular location is the plastid. It is found in the chloroplast thylakoid membrane. Its function is as follows. F(1)F(0) ATP synthase produces ATP from ADP in the presence of a proton or sodium gradient. F-type ATPases consist of two structural domains, F(1) containing the extramembraneous catalytic core and F(0) containing the membrane proton channel, linked together by a central stalk and a peripheral stalk. During catalysis, ATP synthesis in the catalytic domain of F(1) is coupled via a rotary mechanism of the central stalk subunits to proton translocation. Functionally, key component of the F(0) channel; it plays a direct role in translocation across the membrane. A homomeric c-ring of between 10-14 subunits forms the central stalk rotor element with the F(1) delta and epsilon subunits. The polypeptide is ATP synthase subunit c, chloroplastic (Ostreococcus tauri).